A 657-amino-acid polypeptide reads, in one-letter code: Threonine--tRNA ligase (657 aa).

One can recognise a TGS domain in the interval 1-61; sequence MINVTLPDGS…EGDASVAIIT (61 aa). Positions 244 to 549 are catalytic; the sequence is DHRKLGAQLD…LIENYAGSFP (306 aa). Zn(2+) is bound by residues cysteine 349, histidine 400, and histidine 526.

The protein belongs to the class-II aminoacyl-tRNA synthetase family. In terms of assembly, homodimer. The cofactor is Zn(2+).

Its subcellular location is the cytoplasm. The enzyme catalyses tRNA(Thr) + L-threonine + ATP = L-threonyl-tRNA(Thr) + AMP + diphosphate + H(+). Its function is as follows. Catalyzes the attachment of threonine to tRNA(Thr) in a two-step reaction: L-threonine is first activated by ATP to form Thr-AMP and then transferred to the acceptor end of tRNA(Thr). Also edits incorrectly charged L-seryl-tRNA(Thr). The chain is Threonine--tRNA ligase from Hyphomonas neptunium (strain ATCC 15444).